The chain runs to 60 residues: Large ribosomal subunit protein bL32 (60 aa).

A disordered region spans residues 1-21 (MAVQQNKKSPSKRGMHRAHNA). Residues 9–19 (SPSKRGMHRAH) are compositionally biased toward basic residues.

The protein belongs to the bacterial ribosomal protein bL32 family.

In Albidiferax ferrireducens (strain ATCC BAA-621 / DSM 15236 / T118) (Rhodoferax ferrireducens), this protein is Large ribosomal subunit protein bL32.